The primary structure comprises 800 residues: MFISKEWLESYVEINEQVNVLAERITRTGIEVDDIIDYTKEIKNLVVGYVQSIAAHPDADKLNICQVDIGEAEPVQIVCGAPNVDAGQTVIVASVGGRLPGGVKIKRAKLRGEHSEGMICSLQEVGVPSNLVPKQFEDGIFVFSTEVKPGTDALDALYLNDQVMEFDLTPNRADALSMIGTAYETAALYNVPMTKPETQSTETSDQTNDEISVNIQNEDKVPYYSARVVKNVTIAPSPEWMQMRLIKAGIRPINNVVDISNYVLIEYGQPLHMFDQDQIGSKHIEVRQAKADEEMTTLDNQERQLKENDIVITNGETPIAIAGVMGGDFSEVTEATKHVVIEGAIFDPVSIRHTSRRLNLRSEASSRFEKGIATEFVDEAVDRACYLLQTYAGGSVAQGRVSQGELGCFVTPIDISVSKVNQTIGFELSAEDIESIFVQLGFETTKNKDVLTVMVPSRRKDISIKEDLIEEIARIYGYDKIPSTLPVFDQVTHGALTDRQSKSRIIKATLEGAGLNQAINYSLVDKDRAKDFALQERETIDLLMPMSEAHSTLRQSLIPHLIDAVAYNVARKNSDVRLYELGSVFFANGEDELPDEVEYLSGILTGDYTVNHWQSKKETIDFFVAKGIVDRIAEKLDIQFEYEAGEINGLHPGRTAYVELNGEIVGFVGELHPKTEKDYDLKRTYVFELNFDKLMSVSVGYINYQAIPRFPGVSRDIALVVNRATPSAKLVNIIHEHGGNILQEAEVFDVYEGEHMAEDEKSIAIRLAYLDTEQTLTDDKVNAVHEAILEALKSEGATIR.

A tRNA-binding domain is found at 39–154; it reads TKEIKNLVVG…TEVKPGTDAL (116 aa). One can recognise a B5 domain in the interval 408-483; the sequence is CFVTPIDISV…RIYGYDKIPS (76 aa). Mg(2+) is bound by residues Asp-461, Asp-467, Glu-470, and Glu-471. The FDX-ACB domain maps to 708–800; it reads PRFPGVSRDI…ALKSEGATIR (93 aa).

The protein belongs to the phenylalanyl-tRNA synthetase beta subunit family. Type 1 subfamily. Tetramer of two alpha and two beta subunits. Requires Mg(2+) as cofactor.

The protein localises to the cytoplasm. It catalyses the reaction tRNA(Phe) + L-phenylalanine + ATP = L-phenylalanyl-tRNA(Phe) + AMP + diphosphate + H(+). In Staphylococcus saprophyticus subsp. saprophyticus (strain ATCC 15305 / DSM 20229 / NCIMB 8711 / NCTC 7292 / S-41), this protein is Phenylalanine--tRNA ligase beta subunit.